The chain runs to 312 residues: Bark storage protein A (312 aa).

The N-terminal stretch at 1-24 (MPQQSMQASLIDPIAEIERSNCKI) is a signal peptide. N-linked (GlcNAc...) asparagine glycosylation occurs at Asn70.

To wound-inducible poplar endochitinases. As to quaternary structure, monomer. As to expression, bark.

May play a role in nitrogen storage. This is Bark storage protein A (BSPA) from Populus deltoides (Eastern poplar).